We begin with the raw amino-acid sequence, 486 residues long: Probable transporter MCH1 (486 aa).

The next 12 helical transmembrane spans lie at 31-51, 68-88, 95-115, 135-155, 174-194, 211-231, 268-288, 312-333, 349-369, 377-397, 409-429, and 457-477; these read IFAL…FSMY, SVSI…GYLG, YLAL…SGIF, EMAL…YASL, TYTP…SSLW, VAGI…IIFF, FFTD…GGPF, FSTH…VGFS, VIAL…FTVF, VVTI…PTIV, IWGS…LLFA, and FVIT…IWVF.

Belongs to the major facilitator superfamily.

The protein localises to the vacuole membrane. Functionally, probable transporter. This chain is Probable transporter MCH1 (MCH1), found in Yarrowia lipolytica (strain CLIB 122 / E 150) (Yeast).